A 374-amino-acid chain; its full sequence is Phosphatidylglycerol--prolipoprotein diacylglyceryl transferase (374 aa).

4 consecutive transmembrane segments (helical) span residues 33–53, 155–175, 195–215, and 222–242; these read ICFITGFILGYFIIVPIIALF, LCWFIVFGTLIGARLGAVFFY, LASHGGALGVMLALFFYTSYI, and LSFLRVLDFVAIPSALTAVFI. A 1,2-diacyl-sn-glycero-3-phospho-(1'-sn-glycerol) is bound at residue Arg-243. Helical transmembrane passes span 279 to 299, 306 to 326, and 341 to 361; these read PVQLYEAFAYLMTFFLLFTLW, LAAGTYAGFLFIFNFSSRFLL, and ILQMGQLLSIPFILFGICLVW.

The protein belongs to the Lgt family.

It localises to the cell inner membrane. The enzyme catalyses L-cysteinyl-[prolipoprotein] + a 1,2-diacyl-sn-glycero-3-phospho-(1'-sn-glycerol) = an S-1,2-diacyl-sn-glyceryl-L-cysteinyl-[prolipoprotein] + sn-glycerol 1-phosphate + H(+). It participates in protein modification; lipoprotein biosynthesis (diacylglyceryl transfer). Catalyzes the transfer of the diacylglyceryl group from phosphatidylglycerol to the sulfhydryl group of the N-terminal cysteine of a prolipoprotein, the first step in the formation of mature lipoproteins. The protein is Phosphatidylglycerol--prolipoprotein diacylglyceryl transferase of Protochlamydia amoebophila (strain UWE25).